The following is a 503-amino-acid chain: SWI/SNF and RSC complexes subunit ssr2 (503 aa).

Positions 18–115 (IIVPSYAGWF…YQIDPETRPA (98 aa)) constitute an SWIRM domain. A Phosphoserine modification is found at serine 175. Residues 188–242 (RVDKVCFTCGVNCSQTWYHNLKNKKYDICPNCYKQGRFSSSFNSSDFLCMDAIDF) form a ZZ-type; degenerate zinc finger. Residues cysteine 193, cysteine 196, cysteine 216, and cysteine 219 each contribute to the Zn(2+) site. Residues 245–296 (DEEKPWSNQETLLLLEAIETYGDDWNQIALHVGSRTKEQCLIHFLQIPIEDP) form the SANT domain. Phosphoserine is present on serine 306.

Belongs to the SMARCC family. As to quaternary structure, component of the RSC complex composed of at least arp9, arp42, rsc1, rsc4, rsc7, rsc9, rsc58, sfh1, snf21, ssr1, ssr2, ssr3 and ssr4. The complex interacts with histone and histone variant components of centromeric chromatin. Component of the SWI/SNF global transcription activator complex composed of at least arp9, arp42, snf5, snf22, snf30, sbf59, sol1, ssr1, ssr2, ssr3, ssr4 and tfg3.

The protein resides in the cytoplasm. Its subcellular location is the nucleus. In terms of biological role, component of the chromatin structure remodeling complex (RSC), which is involved in transcription regulation and nucleosome positioning. Controls particularly membrane and organelle development genes. Part of the SWI/SNF complex, an ATP-dependent chromatin remodeling complex, required for the positive and negative regulation of gene expression of a large number of genes. It changes chromatin structure by altering DNA-histone contacts within a nucleosome, leading eventually to a change in nucleosome position, thus facilitating or repressing binding of gene-specific transcription factors. In Schizosaccharomyces pombe (strain 972 / ATCC 24843) (Fission yeast), this protein is SWI/SNF and RSC complexes subunit ssr2 (ssr2).